Here is a 165-residue protein sequence, read N- to C-terminus: Lipoprotein signal peptidase (165 aa).

Transmembrane regions (helical) follow at residues proline 9 to valine 29, tryptophan 65 to leucine 85, and threonine 97 to valine 119. Active-site residues include aspartate 121 and aspartate 139. Residues valine 134–phenylalanine 154 traverse the membrane as a helical segment.

This sequence belongs to the peptidase A8 family.

Its subcellular location is the cell inner membrane. The catalysed reaction is Release of signal peptides from bacterial membrane prolipoproteins. Hydrolyzes -Xaa-Yaa-Zaa-|-(S,diacylglyceryl)Cys-, in which Xaa is hydrophobic (preferably Leu), and Yaa (Ala or Ser) and Zaa (Gly or Ala) have small, neutral side chains.. It functions in the pathway protein modification; lipoprotein biosynthesis (signal peptide cleavage). Functionally, this protein specifically catalyzes the removal of signal peptides from prolipoproteins. This chain is Lipoprotein signal peptidase, found in Histophilus somni (strain 2336) (Haemophilus somnus).